A 203-amino-acid polypeptide reads, in one-letter code: Glycerol-3-phosphate acyltransferase (203 aa).

5 helical membrane-spanning segments follow: residues 4–24, 56–76, 80–100, 115–135, and 149–169; these read IAYL…AVIF, LGVL…GFYL, ISVI…PVFF, IIPM…FVFL, and LIVP…VALV.

The protein belongs to the PlsY family. In terms of assembly, probably interacts with PlsX.

The protein localises to the cell inner membrane. It catalyses the reaction an acyl phosphate + sn-glycerol 3-phosphate = a 1-acyl-sn-glycero-3-phosphate + phosphate. It participates in lipid metabolism; phospholipid metabolism. Its function is as follows. Catalyzes the transfer of an acyl group from acyl-phosphate (acyl-PO(4)) to glycerol-3-phosphate (G3P) to form lysophosphatidic acid (LPA). This enzyme utilizes acyl-phosphate as fatty acyl donor, but not acyl-CoA or acyl-ACP. This chain is Glycerol-3-phosphate acyltransferase, found in Glaesserella parasuis serovar 5 (strain SH0165) (Haemophilus parasuis).